Here is a 149-residue protein sequence, read N- to C-terminus: Nucleoside diphosphate kinase (149 aa).

6 residues coordinate ATP: Lys9, Phe57, Arg85, Thr91, Arg102, and Asn112. Residue His115 is the Pros-phosphohistidine intermediate of the active site.

The protein belongs to the NDK family. As to quaternary structure, homotetramer. It depends on Mg(2+) as a cofactor.

It localises to the cytoplasm. The enzyme catalyses a 2'-deoxyribonucleoside 5'-diphosphate + ATP = a 2'-deoxyribonucleoside 5'-triphosphate + ADP. It catalyses the reaction a ribonucleoside 5'-diphosphate + ATP = a ribonucleoside 5'-triphosphate + ADP. Functionally, major role in the synthesis of nucleoside triphosphates other than ATP. The ATP gamma phosphate is transferred to the NDP beta phosphate via a ping-pong mechanism, using a phosphorylated active-site intermediate. This chain is Nucleoside diphosphate kinase, found in Pelotomaculum thermopropionicum (strain DSM 13744 / JCM 10971 / SI).